The sequence spans 125 residues: Large ribosomal subunit protein bL12 (125 aa).

In terms of assembly, homodimer. Part of the ribosomal stalk of the 50S ribosomal subunit. Forms a multimeric L10(L12)X complex, where L10 forms an elongated spine to which 2 to 4 L12 dimers bind in a sequential fashion. Binds GTP-bound translation factors. Post-translationally, two isoforms seem to exist. One is probably dimethylated on Lys-69 and monomethylated on Lys-86 while the other is probably acetylated or trimethylated on both Lys-86 and Lys-89.

In terms of biological role, forms part of the ribosomal stalk which helps the ribosome interact with GTP-bound translation factors. Is thus essential for accurate translation. This Rhodopseudomonas palustris (strain ATCC BAA-98 / CGA009) protein is Large ribosomal subunit protein bL12.